Reading from the N-terminus, the 300-residue chain is 4-hydroxy-tetrahydrodipicolinate synthase (300 aa).

T45 contributes to the pyruvate binding site. Y140 functions as the Proton donor/acceptor in the catalytic mechanism. K169 acts as the Schiff-base intermediate with substrate in catalysis. Pyruvate is bound at residue I210.

Belongs to the DapA family. Homotetramer; dimer of dimers.

The protein resides in the cytoplasm. It carries out the reaction L-aspartate 4-semialdehyde + pyruvate = (2S,4S)-4-hydroxy-2,3,4,5-tetrahydrodipicolinate + H2O + H(+). It functions in the pathway amino-acid biosynthesis; L-lysine biosynthesis via DAP pathway; (S)-tetrahydrodipicolinate from L-aspartate: step 3/4. Catalyzes the condensation of (S)-aspartate-beta-semialdehyde [(S)-ASA] and pyruvate to 4-hydroxy-tetrahydrodipicolinate (HTPA). The chain is 4-hydroxy-tetrahydrodipicolinate synthase from Helicobacter pylori (strain HPAG1).